Here is a 152-residue protein sequence, read N- to C-terminus: MKMLLDDLYEIVEPITADLGYILWGIEVVGSGKLTIRIFIDHENGVSVDDCQIVSKEISAVFDVEDPVSGKYILEVSSPGMNRQIFNIIQAQALVGFNVKAVTLAPVGSQTKFKGVLERVEGNNVILNLEDGKEISFDFDELKKLRVSPDFS.

Belongs to the RimP family.

The protein localises to the cytoplasm. In terms of biological role, required for maturation of 30S ribosomal subunits. The protein is Ribosome maturation factor RimP of Francisella tularensis subsp. tularensis (strain FSC 198).